A 319-amino-acid chain; its full sequence is Ribose-phosphate pyrophosphokinase (319 aa).

Residues 40-42 and 99-100 contribute to the ATP site; these read DGE and RQ. Mg(2+) is bound by residues His-134 and Asp-174. Lys-198 is a catalytic residue. Residues Arg-200, Asp-224, and 228 to 232 contribute to the D-ribose 5-phosphate site; that span reads DTAGT.

Belongs to the ribose-phosphate pyrophosphokinase family. Class I subfamily. As to quaternary structure, homohexamer. Requires Mg(2+) as cofactor.

The protein resides in the cytoplasm. The enzyme catalyses D-ribose 5-phosphate + ATP = 5-phospho-alpha-D-ribose 1-diphosphate + AMP + H(+). Its pathway is metabolic intermediate biosynthesis; 5-phospho-alpha-D-ribose 1-diphosphate biosynthesis; 5-phospho-alpha-D-ribose 1-diphosphate from D-ribose 5-phosphate (route I): step 1/1. Its function is as follows. Involved in the biosynthesis of the central metabolite phospho-alpha-D-ribosyl-1-pyrophosphate (PRPP) via the transfer of pyrophosphoryl group from ATP to 1-hydroxyl of ribose-5-phosphate (Rib-5-P). The chain is Ribose-phosphate pyrophosphokinase from Coxiella burnetii (strain RSA 493 / Nine Mile phase I).